The primary structure comprises 449 residues: Glucose-6-phosphate isomerase (449 aa).

The Proton donor role is filled by Glu-291. Active-site residues include His-312 and Lys-426.

This sequence belongs to the GPI family.

Its subcellular location is the cytoplasm. It catalyses the reaction alpha-D-glucose 6-phosphate = beta-D-fructose 6-phosphate. The protein operates within carbohydrate biosynthesis; gluconeogenesis. It functions in the pathway carbohydrate degradation; glycolysis; D-glyceraldehyde 3-phosphate and glycerone phosphate from D-glucose: step 2/4. In terms of biological role, catalyzes the reversible isomerization of glucose-6-phosphate to fructose-6-phosphate. This Streptococcus pyogenes serotype M12 (strain MGAS2096) protein is Glucose-6-phosphate isomerase.